A 1198-amino-acid chain; its full sequence is Potassium/sodium hyperpolarization-activated cyclic nucleotide-gated channel 4 (1198 aa).

Residues 1–266 (MDKLPPSMRK…PYSDFRFYWD (266 aa)) lie on the Cytoplasmic side of the membrane. Residues 25–183 (IMDEEEDGEE…PASASCEQPS (159 aa)) are disordered. The segment covering 26–36 (MDEEEDGEEEG) has biased composition (acidic residues). Residues 105-118 (SRGGGSGGAGGGSS) are compositionally biased toward gly residues. Over residues 121 to 132 (HLHDSAEERRLI) the composition is skewed to basic and acidic residues. Phosphoserine is present on S139. The span at 164 to 174 (ASPPPQQPPQP) shows a compositional bias: pro residues. The tract at residues 209 to 260 (GQSGFMQRQFGAMLQPGVNKFSLRMFGSQKAVEREQERVKSAGFWIIHPYSD) is involved in subunit assembly. Residues 267–287 (LTMLLLMVGNLIIIPVGITFF) traverse the membrane as a helical segment. Over 288 to 293 (KDENTT) the chain is Extracellular. A helical transmembrane segment spans residues 294-314 (PWIVFNVVSDTFFLIDLVLNF). The Cytoplasmic segment spans residues 315–340 (RTGIVVEDNTEIILDPQRIKMKYLKS). The chain crosses the membrane as a helical span at residues 341–361 (WFVVDFISSIPVDYIFLIVET). Topologically, residues 362 to 368 (RIDSEVY) are extracellular. A helical; Voltage-sensor transmembrane segment spans residues 369 to 389 (KTARALRIVRFTKILSLLRLL). Over 390–420 (RLSRLIRYIHQWEEIFHMTYDLASAVVRIVN) the chain is Cytoplasmic. The helical transmembrane segment at 421-441 (LIGMMLLLCHWDGCLQFLVPM) threads the bilayer. Residues 442–464 (LQDFPHDCWVSINGMVNNSWGKQ) lie on the Extracellular side of the membrane. The N-linked (GlcNAc...) asparagine glycan is linked to N458. An intramembrane region (pore-forming) is located at residues 465–486 (YSYALFKAMSHMLCIGYGRQAP). The Extracellular portion of the chain corresponds to 487–496 (VGMSDVWLTM). The helical transmembrane segment at 497 to 517 (LSMIVGATCYAMFIGHATALI) threads the bilayer. At 518 to 1198 (QSLDSSRRQY…PVRSKLPSNL (681 aa)) the chain is on the cytoplasmic side. Y559, K562, F564, and E566 together coordinate 3',5'-cyclic GMP. 3',5'-cyclic AMP is bound by residues G659, E660, C662, R669, T670, V673, and R710. Residues 804–1198 (AIFRPPPGPG…PVRSKLPSNL (395 aa)) form a disordered region. Composition is skewed to low complexity over residues 831 to 856 (SLIPSALGSASPASSPSQVDTPSSSS) and 866 to 880 (SAPPGLSPLLPSSSS). Pro residues predominate over residues 881-894 (SPPPGACSSPPAPT). Low complexity-rich tracts occupy residues 895–905 (PSTSTAATTTG), 913–937 (LGGSLSSSDSPLLTPLQPGARSPQA), and 965–985 (RSPSSSPGQLGQPPGELSPGL). Positions 1027–1040 (GHSPGPPRTFPSAP) are enriched in pro residues. The span at 1043 to 1054 (ASGSHGSLLLPP) shows a compositional bias: low complexity. Phosphoserine is present on residues S1103 and S1106. The span at 1120 to 1132 (AGGGSGSSGGLGP) shows a compositional bias: gly residues.

Belongs to the potassium channel HCN family. In terms of assembly, homotetramer. The potassium channel is composed of a homo- or heterotetrameric complex of pore-forming subunits. Interacts with PEX5L with a 4:4 HCN4:PEX5L stoichiometry; reduces the effects of cAMP on the voltage-dependence and rate of activation. Interacts with IRAG1; regulates HCN4 channel activity. Interacts with IRAG2; regulates HCN4 channel activity. Post-translationally, S-palmitoylated. In terms of tissue distribution, highly expressed in pyramidal and granule layer of the hippocampus, in thalamus anterior nucleus, in the supraoptic nucleus in hypothalamus, in cerebellum, and in trapezoid nuclei and superior olivary complex in the auditory system. Detected in a subset of elongated cells in taste buds.

Its subcellular location is the cell membrane. It catalyses the reaction K(+)(in) = K(+)(out). The enzyme catalyses Na(+)(in) = Na(+)(out). With respect to regulation, activated by cAMP and at 100 times higher concentrationsand to a lesser extent by cGMP and cCMP. cAMP binding causes a conformation change that leads to the assembly of an active tetramer and channel opening. Binding of cAMP removes a tonic inhibition conferred by cyclic nucleotide-binding domain (CNBD) on channel opening. Cyclic dinucleotides can modulate HCN4 channel; cyclic dinucleotides acting as potent antagonists of cAMP. Inhibited by extracellular Cs(+) ions. Auxiliary subunits can also regulate HCN4 channel. IRAG1 causes a gain-of-function by shifting HCN4 activation to more depolarized membrane potentials in the absence of cAMP. In contrast, IRAG2 causes a loss-of-function by inhibiting cAMP-dependent potentiation of HCN4 activation. Its function is as follows. Hyperpolarization-activated ion channel that are permeable to Na(+) and K(+) ions with very slow activation and inactivation. Exhibits higher selectivity for K(+) over Na(+) ions. Contributes to the native pacemaker currents in heart (If) that regulate the rhythm of heart beat. Contributes to the native pacemaker currents in neurons (Ih). May mediate responses to sour stimuli. The polypeptide is Potassium/sodium hyperpolarization-activated cyclic nucleotide-gated channel 4 (Hcn4) (Rattus norvegicus (Rat)).